The chain runs to 446 residues: NADH oxidase (446 aa).

Residues 7–11 (GTNHA), D32, C42, V79, 109–112 (ATGS), K131, and Y158 contribute to the FAD site. H10 functions as the Proton acceptor in the catalytic mechanism. The active-site Redox-active is the C42. C42 bears the Cysteine sulfinic acid (-SO2H) mark. NAD(+)-binding residues include I159, D178, Y187, and G244. Position 282 (D282) interacts with FAD. A298 contributes to the NAD(+) binding site. FAD is bound by residues L299, A300, and S301. G329 contributes to the NAD(+) binding site. F427 provides a ligand contact to FAD.

This sequence belongs to the class-III pyridine nucleotide-disulfide oxidoreductase family. Homodimer. Requires FAD as cofactor.

It catalyses the reaction 2 NADH + O2 + 2 H(+) = 2 NAD(+) + 2 H2O. Its activity is regulated as follows. Inhibited by hydrogen peroxide, sulfhydryl reagents and quinine, but not by EDTA. Functionally, catalyzes the four-electron reduction of molecular oxygen to water. Active on beta-NADH, but not on alpha-NADH, beta-NADPH or alpha-NADPH. Under aerobic conditions, oxygen acts as the electron acceptor. Under anaerobic conditions, DCIP and MB can replace oxygen as the electron acceptor. The chain is NADH oxidase from Lactococcus lactis subsp. cremoris (strain MG1363).